Reading from the N-terminus, the 343-residue chain is Anthranilate 1,2-dioxygenase electron transfer component (343 aa).

The 2Fe-2S ferredoxin-type domain occupies 3 to 96 (HSVALNFADG…NAAFYFDHHS (94 aa)). Positions 40, 45, 48, and 80 each coordinate [2Fe-2S] cluster. Residues 98–338 (ICNAGETLKI…HIYSEKFLQS (241 aa)) are ferredoxin-reductase. In terms of domain architecture, FAD-binding FR-type spans 103-206 (ETLKIATVVT…EAPLGSFYLR (104 aa)).

It belongs to the bacterial ring-hydroxylating dioxygenase ferredoxin reductase family. Monomer. It is part of the anthranilate dioxygenase two component enzyme system. The other component is an oxygenase component consisting of 3 large (AntA) and 3 small (AntB) subunits. FAD serves as cofactor. The cofactor is [2Fe-2S] cluster.

It catalyses the reaction 2 reduced [2Fe-2S]-[ferredoxin] + NAD(+) + H(+) = 2 oxidized [2Fe-2S]-[ferredoxin] + NADH. It functions in the pathway aromatic compound metabolism; anthranilate degradation via hydroxylation; catechol from anthranilate: step 1/1. Electron transfer component of anthranilate 1,2-dioxygenase system. The polypeptide is Anthranilate 1,2-dioxygenase electron transfer component (Acinetobacter baylyi (strain ATCC 33305 / BD413 / ADP1)).